A 746-amino-acid chain; its full sequence is Mediator of RNA polymerase II transcription subunit 25 (746 aa).

Residues 1–226 (MVPGSEGPAR…PRHMVLVRGL (226 aa)) form an interaction with the Mediator complex region. 2 disordered regions span residues 233 to 273 (GSAP…QQYQ) and 298 to 390 (GLGP…PALG). Over residues 238-251 (PLQPKQPVPLPPAA) the composition is skewed to pro residues. Low complexity predominate over residues 252–262 (PAGATLSTAPQ). The segment covering 329–342 (PPGPPGAPKPPPAS) has biased composition (pro residues). Residues 343 to 354 (QPSLVSTVAPGP) show a composition bias toward low complexity. The segment at 389–543 (LGGQQSVSNK…VNGIRQVITN (155 aa)) is interaction with VP16. Residues 395-545 (VSNKLLAWSG…GIRQVITNHK (151 aa)) are interaction with CREBBP. The segment at 548–746 (QQQKLEQQRG…MEDDILMDLI (199 aa)) is disordered. 2 interaction with RARA regions span residues 563 to 652 (APPG…LLNP) and 639 to 706 (PGAN…WPAQ). The segment covering 599-610 (AAAGQPQPQGAA) has biased composition (low complexity). Positions 611 to 633 (PAPPGAPQGPPGAAPGPPPPGPL) are enriched in pro residues. The LXXLL motif signature appears at 645 to 649 (LRSLL). Composition is skewed to pro residues over residues 651–663 (NPPP…PPPQ), 672–682 (PGAPALLPPPH), and 690–701 (LGPPLLHPPPAQ). Asymmetric dimethylarginine is present on arginine 724. Residues 737-746 (MEDDILMDLI) are compositionally biased toward acidic residues.

The protein belongs to the Mediator complex subunit 25 family. Component of the Mediator complex, which is composed of MED1, MED4, MED6, MED7, MED8, MED9, MED10, MED11, MED12, MED13, MED13L, MED14, MED15, MED16, MED17, MED18, MED19, MED20, MED21, MED22, MED23, MED24, MED25, MED26, MED27, MED29, MED30, MED31, CCNC, CDK8 and CDC2L6/CDK11. The MED12, MED13, CCNC and CDK8 subunits form a distinct module termed the CDK8 module. Mediator containing the CDK8 module is less active than Mediator lacking this module in supporting transcriptional activation. Individual preparations of the Mediator complex lacking one or more distinct subunits have been variously termed ARC, CRSP, DRIP, PC2, SMCC and TRAP. Interacts with CREBBP. Interacts with ESR1, GR, RARA, RXRA and THRB in a ligand-dependent fashion. Binds the Herpes simplex virus activator VP16.

It is found in the nucleus. Component of the Mediator complex, a coactivator involved in the regulated transcription of nearly all RNA polymerase II-dependent genes. Mediator functions as a bridge to convey information from gene-specific regulatory proteins to the basal RNA polymerase II transcription machinery. Mediator is recruited to promoters by direct interactions with regulatory proteins and serves as a scaffold for the assembly of a functional preinitiation complex with RNA polymerase II and the general transcription factors. Required for RARA/RXRA-mediated transcription. This is Mediator of RNA polymerase II transcription subunit 25 (MED25) from Bos taurus (Bovine).